We begin with the raw amino-acid sequence, 240 residues long: MSRSLLTNETSELDLLDQRPFDQTDFDILKSYEAVVDGLAMLIGSHCEIVLHSLQDLKCSAIRIANGEHTGRKIGSPITDLALRMLHDMTGADSSVSKCYFTRAKSGVLMKSLTIAIRNREQRVIGLLCINMNLDVPFSQIMSTFVPPETPDVGSSVNFASSVEDLVTQTLEFTIEEVNADRNVSNNAKNRQIVLNLYEKGIFDIKDAINQVADRLNISKHTVYLYIRQFKSGDFQGQDK.

The protein to H.influenzae HI_0575.

This is an uncharacterized protein from Escherichia coli (strain K12).